The primary structure comprises 20 residues: Apidaecin 2+ (20 aa).

The segment covering 1-13 (GKPNKPRPAPIKP) has biased composition (pro residues). Residues 1-20 (GKPNKPRPAPIKPRPPHPRL) are disordered.

The protein resides in the secreted. Functionally, antimicrobial peptide active against many Gram-negative enterobacterial and plant-associated bacterial species. Not active against other bacterial species like H.pylori, P.mirabilis, B.pertussis or N.gonorrhoeae. The chain is Apidaecin 2+ from Pimpla disparis (Parasitic wasp).